Consider the following 917-residue polypeptide: Catenin alpha (917 aa).

Phosphothreonine occurs at positions 643 and 645. A phosphoserine mark is found at S659 and S662. A compositionally biased stretch (basic and acidic residues) spans 878–890 (PLVRPEKPEEVRA). The segment at 878–905 (PLVRPEKPEEVRAKVRKGSQKKVQNPIH) is disordered.

The protein belongs to the vinculin/alpha-catenin family. Interacts with arm/armadillo protein. Post-translationally, rapidly phosphorylated by CK2 and more slowly by CK1.

It is found in the cytoplasm. Its subcellular location is the cytoskeleton. The protein resides in the cell junction. The protein localises to the adherens junction. It localises to the cell membrane. Functionally, associates with the cytoplasmic domain of a variety of cadherins. The association of catenins to cadherins produces a complex which is linked to the actin filament network, and which seems to be of primary importance for cadherins cell-adhesion properties. This chain is Catenin alpha, found in Drosophila melanogaster (Fruit fly).